Reading from the N-terminus, the 201-residue chain is Ubiquitin-conjugating enzyme E2 E2 (201 aa).

Basic and acidic residues predominate over residues 1–10; that stretch reads MSTEAQRVDD. Residues 1 to 55 form a disordered region; that stretch reads MSTEAQRVDDSPSTSGGSSDGDQRESVQQEPEREQVQPKKKEGKISSKTAAKLST. The residue at position 2 (serine 2) is an N-acetylserine. A phosphoserine mark is found at serine 11, serine 15, serine 18, and serine 19. Residues 21-45 are compositionally biased toward basic and acidic residues; it reads GDQRESVQQEPEREQVQPKKKEGKI. Residues 46-55 show a composition bias toward low complexity; that stretch reads SSKTAAKLST. A UBC core domain is found at 55 to 201; the sequence is TSAKRIQKEL…ARQWTKRYAT (147 aa). Cysteine 139 acts as the Glycyl thioester intermediate in catalysis.

This sequence belongs to the ubiquitin-conjugating enzyme family. Post-translationally, autoubiquitinated in vitro.

It catalyses the reaction S-ubiquitinyl-[E1 ubiquitin-activating enzyme]-L-cysteine + [E2 ubiquitin-conjugating enzyme]-L-cysteine = [E1 ubiquitin-activating enzyme]-L-cysteine + S-ubiquitinyl-[E2 ubiquitin-conjugating enzyme]-L-cysteine.. It functions in the pathway protein modification; protein ubiquitination. Its function is as follows. Accepts ubiquitin from the E1 complex and catalyzes its covalent attachment to other proteins. In vitro catalyzes 'Lys-11'- and 'Lys-48'-, as well as 'Lys-63'-linked polyubiquitination. Catalyzes the ISGylation of influenza A virus NS1 protein. The polypeptide is Ubiquitin-conjugating enzyme E2 E2 (Homo sapiens (Human)).